Here is a 290-residue protein sequence, read N- to C-terminus: Ribosomal RNA small subunit methyltransferase A (290 aa).

Positions 27, 29, 54, 75, 100, and 125 each coordinate S-adenosyl-L-methionine.

It belongs to the class I-like SAM-binding methyltransferase superfamily. rRNA adenine N(6)-methyltransferase family. RsmA subfamily.

It localises to the cytoplasm. It carries out the reaction adenosine(1518)/adenosine(1519) in 16S rRNA + 4 S-adenosyl-L-methionine = N(6)-dimethyladenosine(1518)/N(6)-dimethyladenosine(1519) in 16S rRNA + 4 S-adenosyl-L-homocysteine + 4 H(+). Functionally, specifically dimethylates two adjacent adenosines (A1518 and A1519) in the loop of a conserved hairpin near the 3'-end of 16S rRNA in the 30S particle. May play a critical role in biogenesis of 30S subunits. The protein is Ribosomal RNA small subunit methyltransferase A of Streptococcus pneumoniae (strain ATCC 700669 / Spain 23F-1).